A 137-amino-acid polypeptide reads, in one-letter code: Large ribosomal subunit protein uL16c (137 aa).

Belongs to the universal ribosomal protein uL16 family. In terms of assembly, part of the 50S ribosomal subunit.

Its subcellular location is the plastid. The protein localises to the chloroplast. The chain is Large ribosomal subunit protein uL16c from Trieres chinensis (Marine centric diatom).